We begin with the raw amino-acid sequence, 334 residues long: MKLDEIARLAGVSRTTASYVINGKAKQYRVSDKTVEKVMAVVREHNYHPNAVAAGLRAGRTRSIGLVIPDLENTSYTRIANYLERQARQRGYQLLIACSEDQPDNEMRCIEHLLQRQVDAIIVSTSLPPEHPFYQRWANDPFPIVALDRALDREHFTSVVGADQDDAEMLAEELRKFPAETVLYLGALPELSVSFLREQGFRTAWKDDPREVHFLYANSYEREAAAQLFEKWLETHPMPQALFTTSFALLQGVMDVTLRRDGKLPSDLAIATFGDNELLDFLQCPVLAVAQRHRDVAERVLEIVLASLDEPRKPKPGLTRIKRNLYRRGVLSRS.

Residues 1 to 58 form the HTH lacI-type domain; the sequence is MKLDEIARLAGVSRTTASYVINGKAKQYRVSDKTVEKVMAVVREHNYHPNAVAAGLRA. A DNA-binding region (H-T-H motif) is located at residues 3 to 22; the sequence is LDEIARLAGVSRTTASYVIN.

Homotetramer.

Functionally, global transcriptional regulator, which plays an important role in the regulation of carbon metabolism. In Escherichia coli O157:H7, this protein is Catabolite repressor/activator (cra).